Consider the following 125-residue polypeptide: MPTLEHLTRSPRKKIKRKTKSPALKGCPQKRAICMRVYTTTPKKPNSALRKVTRVRLSSGLEVTAYIPGIGHNLQEHSVVLIRGGRVKDLPGVKYHVIRGCLDAASVKNRKNARSKYGVKKPKPK.

The disordered stretch occupies residues 1–23 (MPTLEHLTRSPRKKIKRKTKSPA). A compositionally biased stretch (basic residues) spans 9–20 (RSPRKKIKRKTK).

It belongs to the universal ribosomal protein uS12 family. Part of the 30S ribosomal subunit.

The protein resides in the plastid. Its subcellular location is the chloroplast. Its function is as follows. With S4 and S5 plays an important role in translational accuracy. Located at the interface of the 30S and 50S subunits. The chain is Small ribosomal subunit protein uS12c (rps12) from Euglena gracilis.